The chain runs to 203 residues: Glycerol-3-phosphate acyltransferase (203 aa).

4 helical membrane-spanning segments follow: residues 4-24 (LALI…AVLI), 68-88 (IPVW…VIAI), 117-137 (PIGL…AVLF), and 155-175 (TWMF…LIVF).

The protein belongs to the PlsY family. In terms of assembly, probably interacts with PlsX.

The protein resides in the cell inner membrane. The catalysed reaction is an acyl phosphate + sn-glycerol 3-phosphate = a 1-acyl-sn-glycero-3-phosphate + phosphate. The protein operates within lipid metabolism; phospholipid metabolism. In terms of biological role, catalyzes the transfer of an acyl group from acyl-phosphate (acyl-PO(4)) to glycerol-3-phosphate (G3P) to form lysophosphatidic acid (LPA). This enzyme utilizes acyl-phosphate as fatty acyl donor, but not acyl-CoA or acyl-ACP. The chain is Glycerol-3-phosphate acyltransferase from Vibrio campbellii (strain ATCC BAA-1116).